The sequence spans 431 residues: Na(+)/H(+) antiporter NhaA (431 aa).

11 consecutive transmembrane segments (helical) span residues valine 33–tryptophan 53, leucine 74–valine 94, alanine 112–valine 132, glycine 144–alanine 164, isoleucine 173–phenylalanine 193, glutamine 197–valine 217, phenylalanine 225–alanine 245, phenylalanine 279–phenylalanine 299, valine 311–alanine 331, valine 347–leucine 367, and alanine 379–leucine 399.

This sequence belongs to the NhaA Na(+)/H(+) (TC 2.A.33) antiporter family.

The protein localises to the cell membrane. The catalysed reaction is Na(+)(in) + 2 H(+)(out) = Na(+)(out) + 2 H(+)(in). Na(+)/H(+) antiporter that extrudes sodium in exchange for external protons. This chain is Na(+)/H(+) antiporter NhaA, found in Mycolicibacterium smegmatis (strain ATCC 700084 / mc(2)155) (Mycobacterium smegmatis).